We begin with the raw amino-acid sequence, 144 residues long: MKIATKYHGDIEIHEKDIVRFEQGIPGFLEEKQFVLLPLEDTPFIILQSVNTPALGFVLIEPFSYFPTYEIELDDNTLEQLQITGEQDVALYVILTVADPFDDTTANLQAPIVINARKRLGKQVILTNTNYKTKHRLFPEKVAK.

This sequence belongs to the FliW family. Interacts with translational regulator CsrA and flagellin(s).

It localises to the cytoplasm. Functionally, acts as an anti-CsrA protein, binds CsrA and prevents it from repressing translation of its target genes, one of which is flagellin. Binds to flagellin and participates in the assembly of the flagellum. The sequence is that of Flagellar assembly factor FliW from Geobacillus kaustophilus (strain HTA426).